The following is a 172-amino-acid chain: Acetolactate synthase small subunit (172 aa).

An ACT domain is found at 4–78; sequence TLSVLVEDEA…NVIKVQDITE (75 aa).

It belongs to the acetolactate synthase small subunit family. Dimer of large and small chains.

The catalysed reaction is 2 pyruvate + H(+) = (2S)-2-acetolactate + CO2. The protein operates within amino-acid biosynthesis; L-isoleucine biosynthesis; L-isoleucine from 2-oxobutanoate: step 1/4. It functions in the pathway amino-acid biosynthesis; L-valine biosynthesis; L-valine from pyruvate: step 1/4. The sequence is that of Acetolactate synthase small subunit (ilvH) from Synechocystis sp. (strain ATCC 27184 / PCC 6803 / Kazusa).